The chain runs to 251 residues: Sec-independent protein translocase protein TatC (251 aa).

Transmembrane regions (helical) follow at residues 23–43 (AFII…SFLL), 73–93 (SAFT…YLFI), 104–124 (IIAF…IFVF), 159–179 (LVIH…VIIV), 197–217 (IAVV…ILSQ), and 218–238 (FALA…CNFI).

Belongs to the TatC family. In terms of assembly, the Tat system comprises two distinct complexes: a TatABC complex, containing multiple copies of TatA, TatB and TatC subunits, and a separate TatA complex, containing only TatA subunits. Substrates initially bind to the TatABC complex, which probably triggers association of the separate TatA complex to form the active translocon.

The protein localises to the cell inner membrane. Part of the twin-arginine translocation (Tat) system that transports large folded proteins containing a characteristic twin-arginine motif in their signal peptide across membranes. Together with TatB, TatC is part of a receptor directly interacting with Tat signal peptides. The sequence is that of Sec-independent protein translocase protein TatC from Rickettsia prowazekii (strain Madrid E).